We begin with the raw amino-acid sequence, 905 residues long: Heme/hemopexin-binding protein (905 aa).

An N-terminal signal peptide occupies residues 1–21; the sequence is MYKLNVISLIILTTYTGATYA.

The protein localises to the secreted. In terms of biological role, binds heme/hemopexin complexes. In Haemophilus influenzae (strain ATCC 51907 / DSM 11121 / KW20 / Rd), this protein is Heme/hemopexin-binding protein (hxuA).